The chain runs to 106 residues: Large ribosomal subunit protein P2 (106 aa).

Residues 80 to 106 (AAAAPAKKVVEEKKEESDDDMGMGLFD) form a disordered region.

The protein belongs to the eukaryotic ribosomal protein P1/P2 family. In terms of assembly, P1 and P2 exist as dimers at the large ribosomal subunit. Post-translationally, phosphorylated.

Plays an important role in the elongation step of protein synthesis. This Dictyostelium discoideum (Social amoeba) protein is Large ribosomal subunit protein P2 (rplp2).